The primary structure comprises 141 residues: Endoribonuclease YbeY (141 aa).

Residues histidine 101, histidine 105, and histidine 111 each coordinate Zn(2+).

This sequence belongs to the endoribonuclease YbeY family. Zn(2+) serves as cofactor.

The protein localises to the cytoplasm. Its function is as follows. Single strand-specific metallo-endoribonuclease involved in late-stage 70S ribosome quality control and in maturation of the 3' terminus of the 16S rRNA. The sequence is that of Endoribonuclease YbeY from Nitrosomonas eutropha (strain DSM 101675 / C91 / Nm57).